The following is a 200-amino-acid chain: Holliday junction branch migration complex subunit RuvA (200 aa).

The interval 1 to 65 (MYEYIKGTLT…ETEHVLYGFS (65 aa)) is domain I. The segment at 66–144 (SRAERECFRL…TLMPLYLEEP (79 aa)) is domain II. Residues 145–149 (VVPSS) are flexible linker. Residues 150–200 (TANSSFKEGIGALMNLGFSRLAADRMMTEAVKELSEEASVAELLPIALRKS) form a domain III region.

This sequence belongs to the RuvA family. In terms of assembly, homotetramer. Forms an RuvA(8)-RuvB(12)-Holliday junction (HJ) complex. HJ DNA is sandwiched between 2 RuvA tetramers; dsDNA enters through RuvA and exits via RuvB. An RuvB hexamer assembles on each DNA strand where it exits the tetramer. Each RuvB hexamer is contacted by two RuvA subunits (via domain III) on 2 adjacent RuvB subunits; this complex drives branch migration. In the full resolvosome a probable DNA-RuvA(4)-RuvB(12)-RuvC(2) complex forms which resolves the HJ.

The protein localises to the cytoplasm. Functionally, the RuvA-RuvB-RuvC complex processes Holliday junction (HJ) DNA during genetic recombination and DNA repair, while the RuvA-RuvB complex plays an important role in the rescue of blocked DNA replication forks via replication fork reversal (RFR). RuvA specifically binds to HJ cruciform DNA, conferring on it an open structure. The RuvB hexamer acts as an ATP-dependent pump, pulling dsDNA into and through the RuvAB complex. HJ branch migration allows RuvC to scan DNA until it finds its consensus sequence, where it cleaves and resolves the cruciform DNA. The protein is Holliday junction branch migration complex subunit RuvA of Chlamydia trachomatis serovar L2 (strain ATCC VR-902B / DSM 19102 / 434/Bu).